Reading from the N-terminus, the 510-residue chain is Inositol-3-phosphate synthase isozyme 2 (510 aa).

The protein belongs to the myo-inositol 1-phosphate synthase family. Requires NAD(+) as cofactor. In terms of tissue distribution, expressed in siliques, leaves, roots, seed endosperm, but not in embryos. Highest expression in seeds. In leaves, only expressed in hydathodes and vascular tissue.

It is found in the cytoplasm. It catalyses the reaction D-glucose 6-phosphate = 1D-myo-inositol 3-phosphate. Its pathway is polyol metabolism; myo-inositol biosynthesis; myo-inositol from D-glucose 6-phosphate: step 1/2. Key enzyme in myo-inositol biosynthesis pathway that catalyzes the conversion of glucose 6-phosphate to 1-myo-inositol 1-phosphate in a NAD-dependent manner. In Arabidopsis thaliana (Mouse-ear cress), this protein is Inositol-3-phosphate synthase isozyme 2 (IPS2).